Consider the following 461-residue polypeptide: Cysteine--tRNA ligase (461 aa).

Cys-28 contributes to the Zn(2+) binding site. Positions Ile-30–His-40 match the 'HIGH' region motif. Zn(2+)-binding residues include Cys-209, His-234, and Glu-238. Positions Lys-266–Ser-270 match the 'KMSKS' region motif. Lys-269 lines the ATP pocket.

Belongs to the class-I aminoacyl-tRNA synthetase family. As to quaternary structure, monomer. Requires Zn(2+) as cofactor.

It localises to the cytoplasm. It carries out the reaction tRNA(Cys) + L-cysteine + ATP = L-cysteinyl-tRNA(Cys) + AMP + diphosphate. This is Cysteine--tRNA ligase from Escherichia coli (strain K12 / MC4100 / BW2952).